A 500-amino-acid chain; its full sequence is Glycerol kinase (500 aa).

Threonine 13 serves as a coordination point for ADP. ATP-binding residues include threonine 13, threonine 14, and serine 15. Position 13 (threonine 13) interacts with sn-glycerol 3-phosphate. Arginine 17 contacts ADP. Sn-glycerol 3-phosphate-binding residues include arginine 83, glutamate 84, tyrosine 135, and aspartate 245. Residues arginine 83, glutamate 84, tyrosine 135, aspartate 245, and glutamine 246 each contribute to the glycerol site. ADP-binding residues include threonine 267 and glycine 310. ATP is bound by residues threonine 267, glycine 310, glutamine 314, and glycine 411. Glycine 411 and asparagine 415 together coordinate ADP.

Belongs to the FGGY kinase family. In terms of assembly, homotetramer and homodimer (in equilibrium).

The catalysed reaction is glycerol + ATP = sn-glycerol 3-phosphate + ADP + H(+). It participates in polyol metabolism; glycerol degradation via glycerol kinase pathway; sn-glycerol 3-phosphate from glycerol: step 1/1. Activated by phosphorylation and inhibited by fructose 1,6-bisphosphate (FBP). Key enzyme in the regulation of glycerol uptake and metabolism. Catalyzes the phosphorylation of glycerol to yield sn-glycerol 3-phosphate. The polypeptide is Glycerol kinase (Carboxydothermus hydrogenoformans (strain ATCC BAA-161 / DSM 6008 / Z-2901)).